The primary structure comprises 419 residues: UDP-N-acetylglucosamine 1-carboxyvinyltransferase (419 aa).

22–23 is a phosphoenolpyruvate binding site; it reads KN. UDP-N-acetyl-alpha-D-glucosamine is bound at residue arginine 93. The Proton donor role is filled by cysteine 117. 2-(S-cysteinyl)pyruvic acid O-phosphothioketal is present on cysteine 117. Positions 307 and 329 each coordinate UDP-N-acetyl-alpha-D-glucosamine.

The protein belongs to the EPSP synthase family. MurA subfamily.

It is found in the cytoplasm. It carries out the reaction phosphoenolpyruvate + UDP-N-acetyl-alpha-D-glucosamine = UDP-N-acetyl-3-O-(1-carboxyvinyl)-alpha-D-glucosamine + phosphate. It functions in the pathway cell wall biogenesis; peptidoglycan biosynthesis. Cell wall formation. Adds enolpyruvyl to UDP-N-acetylglucosamine. The sequence is that of UDP-N-acetylglucosamine 1-carboxyvinyltransferase from Shewanella putrefaciens (strain CN-32 / ATCC BAA-453).